The following is a 224-amino-acid chain: Cytosolic-abundant heat soluble protein 77580 (224 aa).

Residues 1 to 13 (MSNYQQESSYQYS) show a composition bias toward low complexity. The disordered stretch occupies residues 1 to 38 (MSNYQQESSYQYSDRSNNGQQQEQQEKKEVEHSSYTHT). Residues 24–38 (QQEKKEVEHSSYTHT) show a composition bias toward basic and acidic residues. The stretch at 83 to 191 (VIDTEAETEE…KRVLERSKFH (109 aa)) forms a coiled coil. CAHS motif regions lie at residues 122–140 (YRKQQEVETEKIRKELEKQ) and 159–177 (QKRQIDLEARYAKKELERE). Positions 200–215 (AAAGSTHSGSSSVAVS) are enriched in low complexity. Residues 200–224 (AAAGSTHSGSSSVAVSESEKFQTNN) form a disordered region.

Belongs to the Cytosolic-abundant heat soluble protein (CAHS) family.

It localises to the cytoplasm. Its function is as follows. CAHS proteins are cytosolic heat soluble proteins that seem to contribute to the anhydrobiosis in tardigrades, but their specific mechanisms are yet to be identified. It is possible that protection during anhydrobiosis might occur via the stabilization of vitrifying small molecules such as sugars, but not via the direct glass transition of CAHS proteins themselves. This is Cytosolic-abundant heat soluble protein 77580 from Hypsibius exemplaris (Freshwater tardigrade).